Consider the following 262-residue polypeptide: uncharacterized protein (262 aa).

Transmembrane regions (helical) follow at residues 4–24 (LIVFLSMLSSSVAGFFGRFLG), 28–48 (VSRFNLIIFLILLVFSICLFR), and 62–82 (CYLALVCQISLFLVLLRSHIL). Positions 152–181 (EREARAQEHDRISAEVETITSACENLEAAM) form a coiled coil.

It localises to the mitochondrion membrane. This is an uncharacterized protein from Arabidopsis thaliana (Mouse-ear cress).